A 568-amino-acid polypeptide reads, in one-letter code: Sphingosine-1-phosphate lyase 1 (568 aa).

Residues 1-40 (MPSTDLLMLKAFEPYLEILEVYSTKAKNYVNGHCTKYEPW) are Lumenal-facing. Residues 41-61 (QLIAWSVVWTLLIVWGYEFVF) traverse the membrane as a helical; Signal-anchor for type III membrane protein segment. At 62–568 (QPESLWSRFK…SQMNGSPKPH (507 aa)) the chain is on the cytoplasmic side. An N6-(pyridoxal phosphate)lysine; alternate modification is found at Lys-353. Lys-353 bears the N6-acetyllysine; alternate mark. 3'-nitrotyrosine is present on residues Tyr-356 and Tyr-366. Ser-564 is modified (phosphoserine).

It belongs to the group II decarboxylase family. Sphingosine-1-phosphate lyase subfamily. As to quaternary structure, homodimer. It depends on pyridoxal 5'-phosphate as a cofactor. As to expression, ubiquitously expressed. Expressed in fetal and adult adrenal gland (at protein level).

It is found in the endoplasmic reticulum membrane. The enzyme catalyses sphinganine 1-phosphate = hexadecanal + phosphoethanolamine. It carries out the reaction sphing-4-enine 1-phosphate = (2E)-hexadecenal + phosphoethanolamine. Its pathway is lipid metabolism; sphingolipid metabolism. Functionally, cleaves phosphorylated sphingoid bases (PSBs), such as sphingosine-1-phosphate, into fatty aldehydes and phosphoethanolamine. Elevates stress-induced ceramide production and apoptosis. Required for global lipid homeostasis in liver and cholesterol homeostasis in fibroblasts. Involved in the regulation of pro-inflammatory response and neutrophil trafficking. Modulates neuronal autophagy via phosphoethanolamine production which regulates accumulation of aggregate-prone proteins such as APP. Seems to play a role in establishing neuronal contact sites and axonal maintenance. The sequence is that of Sphingosine-1-phosphate lyase 1 from Homo sapiens (Human).